We begin with the raw amino-acid sequence, 130 residues long: Small ribosomal subunit protein uS11c (130 aa).

It belongs to the universal ribosomal protein uS11 family. In terms of assembly, part of the 30S ribosomal subunit.

Its subcellular location is the plastid. The protein resides in the chloroplast. The polypeptide is Small ribosomal subunit protein uS11c (Stigeoclonium helveticum (Green alga)).